A 167-amino-acid chain; its full sequence is Urease accessory protein UreE (167 aa).

Belongs to the UreE family.

It localises to the cytoplasm. Its function is as follows. Involved in urease metallocenter assembly. Binds nickel. Probably functions as a nickel donor during metallocenter assembly. This Pseudomonas paraeruginosa (strain DSM 24068 / PA7) (Pseudomonas aeruginosa (strain PA7)) protein is Urease accessory protein UreE.